The sequence spans 256 residues: Gramicidin S biosynthesis protein GrsT (256 aa).

Serine 95 is a catalytic residue.

It belongs to the thioesterase family.

It functions in the pathway antibiotic biosynthesis; gramicidin S biosynthesis. In terms of biological role, probable thioesterase involved in the biosynthesis of gramicidin S. In Aneurinibacillus migulanus (Bacillus migulanus), this protein is Gramicidin S biosynthesis protein GrsT (grsT).